Here is a 334-residue protein sequence, read N- to C-terminus: D-fructose 1,6-bisphosphatase class 2/sedoheptulose 1,7-bisphosphatase (334 aa).

Mn(2+) contacts are provided by Asp33, Glu57, Asp85, and Glu88. Residues 88-90, Tyr119, 164-166, and 186-188 contribute to the substrate site; these read EGT, RAR, and DGD. Glu213 provides a ligand contact to Mn(2+).

It belongs to the FBPase class 2 family. Homotetramer. Mn(2+) is required as a cofactor.

The enzyme catalyses beta-D-fructose 1,6-bisphosphate + H2O = beta-D-fructose 6-phosphate + phosphate. It carries out the reaction D-sedoheptulose 1,7-bisphosphate + H2O = D-sedoheptulose 7-phosphate + phosphate. Its pathway is carbohydrate biosynthesis; Calvin cycle. Its function is as follows. Catalyzes the hydrolysis of fructose 1,6-bisphosphate (Fru 1,6-P2) and sedoheptulose 1,7-bisphosphate (Sed 1,7-P2) to fructose 6-phosphate and sedoheptulose 7-phosphate, respectively. The protein is D-fructose 1,6-bisphosphatase class 2/sedoheptulose 1,7-bisphosphatase of Prochlorococcus marinus (strain MIT 9313).